We begin with the raw amino-acid sequence, 697 residues long: PAN2-PAN3 deadenylation complex subunit PAN3 (697 aa).

The C3H1-type zinc finger occupies 7-36; that stretch reads TAKDTLCKNILIYGYCKYENKGCAFSHNRQ. The tract at residues 40–67 is disordered; sequence QQQQATNTSNNSTSVITPNSANSTASSA. 2 short sequence motifs (PABPC-interacting motif-2 (PAM-2)) span residues 69–89 and 106–126; these read LSSK…VSNL and FKPE…TQRP. Residues 106 to 240 form a disordered region; sequence FKPENGVSEP…SAPTPGSETP (135 aa). Residues 119–153 show a composition bias toward polar residues; sequence DSPTTQRPFTSKRFNVSTPSFTPTNFDFANNSNAD. Over residues 172–187 the composition is skewed to low complexity; the sequence is QNQQQQQQQQQQQQKQ. Residues 212–224 show a composition bias toward polar residues; that stretch reads GVSQSSPSTNPYF. The interval 308–576 is pseudokinase domain; that stretch reads QSLSHSNLPE…DLNEFSQRLT (269 aa). ATP is bound by residues Arg361, 416 to 423, and 470 to 471; these read DYYPNSIS and SK. Residues 577–615 are a coiled coil; it reads PKMFNIIDSLQNSSDFIEGQLTSELENARLFRLMTKLNY. The knob domain stretch occupies residues 616–697; the sequence is LIHDNSNSEN…IDTKFRLMRE (82 aa).

It belongs to the protein kinase superfamily. PAN3 family. In terms of assembly, homodimer. Forms a heterotrimer with a catalytic subunit PAN2 to form the poly(A)-nuclease (PAN) deadenylation complex. Interacts (via PAM-2 motif) with poly(A)-binding protein PAB1 (via PABC domain), conferring substrate specificity of the enzyme complex.

The protein resides in the cytoplasm. Regulatory subunit of the poly(A)-nuclease (PAN) deadenylation complex, one of two cytoplasmic mRNA deadenylases involved in mRNA turnover. PAN specifically shortens poly(A) tails of RNA and the activity is stimulated by poly(A)-binding protein PAB1. PAN deadenylation is followed by rapid degradation of the shortened mRNA tails by the CCR4-NOT complex. Deadenylated mRNAs are then degraded by two alternative mechanisms, namely exosome-mediated 3'-5' exonucleolytic degradation, or deadenylation-dependent mRNA decaping and subsequent 5'-3' exonucleolytic degradation by XRN1. May also be involved in post-transcriptional maturation of mRNA poly(A) tails. PAN3 acts as a positive regulator for PAN activity, recruiting the catalytic subunit PAN2 to mRNA via its interaction with RNA and with PAB1. The polypeptide is PAN2-PAN3 deadenylation complex subunit PAN3 (Candida albicans (strain SC5314 / ATCC MYA-2876) (Yeast)).